A 105-amino-acid polypeptide reads, in one-letter code: U7-hexatoxin-Hi1a (105 aa).

The N-terminal stretch at 1–23 (MKTILLFLGVCAVGASMMTGGWT) is a signal peptide.

Belongs to the cystatin family. In terms of processing, contains 2 disulfide bonds. As to expression, expressed by the venom gland.

It is found in the secreted. In terms of biological role, inhibits various C1 cysteine proteases. This protein has no toxic activity and its function in the venom is unknown. It may play a role as a housekeeping or regulatory protein. The protein is U7-hexatoxin-Hi1a of Hadronyche infensa (Fraser island funnel-web spider).